The sequence spans 150 residues: Macrodomain Ter protein (150 aa).

It belongs to the MatP family. As to quaternary structure, homodimer.

It is found in the cytoplasm. Its function is as follows. Required for spatial organization of the terminus region of the chromosome (Ter macrodomain) during the cell cycle. Prevents early segregation of duplicated Ter macrodomains during cell division. Binds specifically to matS, which is a 13 bp signature motif repeated within the Ter macrodomain. The sequence is that of Macrodomain Ter protein from Escherichia coli (strain SMS-3-5 / SECEC).